We begin with the raw amino-acid sequence, 29 residues long: Kalata-B11 (29 aa).

The segment at residues 1–29 (GLPVCGETCFGGTCNTPGCSCTDPICTRD) is a cross-link (cyclopeptide (Gly-Asp)). Cystine bridges form between cysteine 5-cysteine 19, cysteine 9-cysteine 21, and cysteine 14-cysteine 26.

In terms of processing, this is a cyclic peptide.

Functionally, probably participates in a plant defense mechanism. This Oldenlandia affinis protein is Kalata-B11.